The sequence spans 370 residues: MSSPIIIRAPKKQPPEPPCLISLLPEEIVVDIVARVPRCYYPTLSQVSRRFRSLVASPEIYKRRSFFGCTEQCLYIAISKDQTSDIHWFTLCRKPNGQQFSGTTASDHRLVHIPTLPPMPMHGSYVGIGSNIFVMGGFCNWKITSSVSLIDCRTHTAQTLPNMPKAVAFPVTELIDRKIYVIGGSDTLSPMKSPSRIMMVYDTDTEMWQLRARPDWEAGKKWFSSVVIGGKIYMRTYHNSFVCDPNDTSCDRDEVLHSKEWWSACVIDDVLYYYDVRENCLRAYDPKQRAWGVVKGFEGLLPVACKWSKTVSYTGGKLVLFLQKTEKTEIWCAEIAVERREGGEIWGKVEWCNVVLSGNFHIMDCVAVVL.

One can recognise an F-box domain in the interval Pro18–Arg64. Kelch repeat units lie at residues Asn131 to Arg177, Lys178 to Gly230, and Ser263 to Gly315.

Part of a SCF (ASK-cullin-F-box) protein ligase complex. Interacts with SKP1A/ASK1, SKP1B/ASK2, ASK11, ASK13 and ASK18.

It is found in the nucleus. It functions in the pathway protein modification; protein ubiquitination. In terms of biological role, component of SCF(ASK-cullin-F-box) E3 ubiquitin ligase complexes, which may mediate the ubiquitination and subsequent proteasomal degradation of target proteins. This is F-box/kelch-repeat protein At4g38940 from Arabidopsis thaliana (Mouse-ear cress).